Reading from the N-terminus, the 285-residue chain is MQTSLFEFANVLITAVKEASYSISKFKEEVEIKYKSDGSEVTQVDTQSQQIIFSIIKNKYPTINIIGEEDVENGIPDNQLPTITQLSFGSLENKIININDIIIYVDPLDGTDCYTHKQYDSVCVLVGVTYKGKPMIGIVSKPFYNNEITFAIENYISSISLQPLNDKIIFVCSKKNDIQHLIKSFPDPYEVKYKGGSGAKMMAIIHQEADIYYHPLIQSCTWDTLAAQVILEAQGGIVCDIYGNPLCYPSSKKESMRHKKGVLCLSPRAKKYLPYMLSISKTILL.

The Mg(2+) site is built by E68, D106, L108, and D109. 7 residues coordinate 1D-myo-inositol 1,4-bisphosphate: D109, G110, T111, S173, G195, S197, and K200. A Mg(2+)-binding site is contributed by D223.

Belongs to the inositol monophosphatase superfamily. As to quaternary structure, monomer. It depends on Mg(2+) as a cofactor.

The protein resides in the cytoplasm. It catalyses the reaction 1D-myo-inositol 1,4-bisphosphate + H2O = 1D-myo-inositol 4-phosphate + phosphate. The catalysed reaction is adenosine 3',5'-bisphosphate + H2O = AMP + phosphate. Partially inhibited by Li(2+). In terms of biological role, catalyzes the hydrolysis of the 1-position phosphate from inositol 1,4-bisphosphate. Is also able to convert 3'(2')-phosphoadenosine 5'-phosphate (PAP) to AMP but with less efficiency. This is Inositol polyphosphate 1-phosphatase from Entamoeba histolytica (strain ATCC 30459 / HM-1:IMSS / ABRM).